Consider the following 473-residue polypeptide: Hyaluronidase-2 (473 aa).

The signal sequence occupies residues 1–20 (MRAGPGPTVTLALVLAVSWA). Cystine bridges form between C47-C340 and C211-C227. N-linked (GlcNAc...) asparagine glycosylation is found at N74 and N103. The active-site Proton donor is the E135. N-linked (GlcNAc...) asparagine glycosylation is present at N357. Residues 361–439 (ATQYCSRAQC…YLGWSGEQCQ (79 aa)) enclose the EGF-like domain. 3 cysteine pairs are disulfide-bonded: C365–C376, C370–C427, and C429–C438. G448 carries the GPI-anchor amidated glycine lipid modification. A propeptide spans 449–473 (ASEAWAGSHLTSLLALAALAFTWTL) (removed in mature form).

It belongs to the glycosyl hydrolase 56 family. Interacts with MST1R. In terms of tissue distribution, widely expressed (at protein level).

It is found in the cell membrane. It carries out the reaction Random hydrolysis of (1-&gt;4)-linkages between N-acetyl-beta-D-glucosamine and D-glucuronate residues in hyaluronate.. Its function is as follows. Catalyzes hyaluronan degradation into small fragments that are endocytosed and degraded in lysosomes by HYAL1 and exoglycosidases. Essential for the breakdown of extracellular matrix hyaluronan. The protein is Hyaluronidase-2 (HYAL2) of Homo sapiens (Human).